The primary structure comprises 207 residues: 2,3-bisphosphoglycerate-dependent phosphoglycerate mutase (207 aa).

Substrate contacts are provided by residues 10 to 17 (RHGQSEWN), 23 to 24 (TG), Arg-62, 89 to 92 (ERDY), Lys-100, 116 to 117 (RR), and 160 to 161 (GN). His-11 (tele-phosphohistidine intermediate) is an active-site residue. The active-site Proton donor/acceptor is the Glu-89.

It belongs to the phosphoglycerate mutase family. BPG-dependent PGAM subfamily. As to quaternary structure, homodimer.

The catalysed reaction is (2R)-2-phosphoglycerate = (2R)-3-phosphoglycerate. It participates in carbohydrate degradation; glycolysis; pyruvate from D-glyceraldehyde 3-phosphate: step 3/5. Functionally, catalyzes the interconversion of 2-phosphoglycerate and 3-phosphoglycerate. This is 2,3-bisphosphoglycerate-dependent phosphoglycerate mutase from Bradyrhizobium sp. (strain ORS 278).